The sequence spans 383 residues: Heme A synthase (383 aa).

The next 8 helical transmembrane spans lie at 38–58 (VRVW…VGGL), 127–147 (VIGL…KIPP), 153–173 (LFLL…MVAS), 187–207 (LATH…YIMV), 230–250 (ANWL…VAGI), 287–307 (LVQF…LYVW), 321–341 (AFDW…VTVL), and 344–364 (APWT…CLIL). His292 contributes to the heme binding site. His352 contacts heme.

This sequence belongs to the COX15/CtaA family. Type 2 subfamily. In terms of assembly, interacts with CtaB. It depends on heme b as a cofactor.

It localises to the cell membrane. The catalysed reaction is Fe(II)-heme o + 2 A + H2O = Fe(II)-heme a + 2 AH2. It participates in porphyrin-containing compound metabolism; heme A biosynthesis; heme A from heme O: step 1/1. Its function is as follows. Catalyzes the conversion of heme O to heme A by two successive hydroxylations of the methyl group at C8. The first hydroxylation forms heme I, the second hydroxylation results in an unstable dihydroxymethyl group, which spontaneously dehydrates, resulting in the formyl group of heme A. The polypeptide is Heme A synthase (Dinoroseobacter shibae (strain DSM 16493 / NCIMB 14021 / DFL 12)).